The chain runs to 121 residues: Large ribosomal subunit protein bL20 (121 aa).

The protein belongs to the bacterial ribosomal protein bL20 family.

Functionally, binds directly to 23S ribosomal RNA and is necessary for the in vitro assembly process of the 50S ribosomal subunit. It is not involved in the protein synthesizing functions of that subunit. The chain is Large ribosomal subunit protein bL20 from Sphingopyxis alaskensis (strain DSM 13593 / LMG 18877 / RB2256) (Sphingomonas alaskensis).